The sequence spans 341 residues: Heat-inducible transcription repressor HrcA (341 aa).

This sequence belongs to the HrcA family.

In terms of biological role, negative regulator of class I heat shock genes (grpE-dnaK-dnaJ and groELS operons). Prevents heat-shock induction of these operons. The sequence is that of Heat-inducible transcription repressor HrcA from Corynebacterium glutamicum (strain ATCC 13032 / DSM 20300 / JCM 1318 / BCRC 11384 / CCUG 27702 / LMG 3730 / NBRC 12168 / NCIMB 10025 / NRRL B-2784 / 534).